Consider the following 246-residue polypeptide: Probable transcriptional regulatory protein SPO1072 (246 aa).

The interval 1–22 is disordered; the sequence is MAGHSKWANIQHRKGRQDAARS.

It belongs to the TACO1 family.

The protein localises to the cytoplasm. The polypeptide is Probable transcriptional regulatory protein SPO1072 (Ruegeria pomeroyi (strain ATCC 700808 / DSM 15171 / DSS-3) (Silicibacter pomeroyi)).